Consider the following 477-residue polypeptide: Ribulose bisphosphate carboxylase large chain (477 aa).

Residues 1 to 2 (MS) constitute a propeptide that is removed on maturation. Position 3 is an N-acetylproline (proline 3). Position 14 is an N6,N6,N6-trimethyllysine (lysine 14). Residues asparagine 123 and threonine 173 each coordinate substrate. The active-site Proton acceptor is the lysine 175. Lysine 177 is a substrate binding site. Positions 201, 203, and 204 each coordinate Mg(2+). At lysine 201 the chain carries N6-carboxylysine. Histidine 294 serves as the catalytic Proton acceptor. Residues arginine 295, histidine 327, and serine 379 each contribute to the substrate site.

Belongs to the RuBisCO large chain family. Type I subfamily. As to quaternary structure, heterohexadecamer of 8 large chains and 8 small chains; disulfide-linked. The disulfide link is formed within the large subunit homodimers. Mg(2+) serves as cofactor. The disulfide bond which can form in the large chain dimeric partners within the hexadecamer appears to be associated with oxidative stress and protein turnover.

The protein localises to the plastid. It localises to the chloroplast. It carries out the reaction 2 (2R)-3-phosphoglycerate + 2 H(+) = D-ribulose 1,5-bisphosphate + CO2 + H2O. The enzyme catalyses D-ribulose 1,5-bisphosphate + O2 = 2-phosphoglycolate + (2R)-3-phosphoglycerate + 2 H(+). Functionally, ruBisCO catalyzes two reactions: the carboxylation of D-ribulose 1,5-bisphosphate, the primary event in carbon dioxide fixation, as well as the oxidative fragmentation of the pentose substrate in the photorespiration process. Both reactions occur simultaneously and in competition at the same active site. This Persea americana (Avocado) protein is Ribulose bisphosphate carboxylase large chain.